An 824-amino-acid chain; its full sequence is Leucine--tRNA ligase (824 aa).

The 'HIGH' region signature appears at 41–51; that stretch reads PYPSGTLHVGH. A 'KMSKS' region motif is present at residues 580-584; sequence KMSKS. Lys-583 serves as a coordination point for ATP.

Belongs to the class-I aminoacyl-tRNA synthetase family.

Its subcellular location is the cytoplasm. The enzyme catalyses tRNA(Leu) + L-leucine + ATP = L-leucyl-tRNA(Leu) + AMP + diphosphate. This Thermotoga maritima (strain ATCC 43589 / DSM 3109 / JCM 10099 / NBRC 100826 / MSB8) protein is Leucine--tRNA ligase.